Reading from the N-terminus, the 144-residue chain is 3-dehydroquinate dehydratase (144 aa).

Tyrosine 22 acts as the Proton acceptor in catalysis. Substrate contacts are provided by asparagine 73, histidine 79, and aspartate 86. The active-site Proton donor is histidine 99. Residues 100-101 and arginine 110 each bind substrate; that span reads LS.

It belongs to the type-II 3-dehydroquinase family. As to quaternary structure, homododecamer.

The catalysed reaction is 3-dehydroquinate = 3-dehydroshikimate + H2O. It participates in metabolic intermediate biosynthesis; chorismate biosynthesis; chorismate from D-erythrose 4-phosphate and phosphoenolpyruvate: step 3/7. Functionally, catalyzes a trans-dehydration via an enolate intermediate. The sequence is that of 3-dehydroquinate dehydratase from Trichlorobacter lovleyi (strain ATCC BAA-1151 / DSM 17278 / SZ) (Geobacter lovleyi).